The primary structure comprises 294 residues: Acetaldehyde dehydrogenase (294 aa).

Residue 11–14 participates in NAD(+) binding; sequence SGNI. Residue Cys126 is the Acyl-thioester intermediate of the active site. NAD(+) contacts are provided by residues 157 to 165 and Asn269; that span reads SAGPGTRAN.

Belongs to the acetaldehyde dehydrogenase family.

It carries out the reaction acetaldehyde + NAD(+) + CoA = acetyl-CoA + NADH + H(+). This Geobacillus stearothermophilus (Bacillus stearothermophilus) protein is Acetaldehyde dehydrogenase (pheF).